The sequence spans 448 residues: tRNA(Ile)-lysidine synthase (448 aa).

An ATP-binding site is contributed by 25–30 (SGGSDS).

This sequence belongs to the tRNA(Ile)-lysidine synthase family.

It is found in the cytoplasm. It catalyses the reaction cytidine(34) in tRNA(Ile2) + L-lysine + ATP = lysidine(34) in tRNA(Ile2) + AMP + diphosphate + H(+). Ligates lysine onto the cytidine present at position 34 of the AUA codon-specific tRNA(Ile) that contains the anticodon CAU, in an ATP-dependent manner. Cytidine is converted to lysidine, thus changing the amino acid specificity of the tRNA from methionine to isoleucine. This chain is tRNA(Ile)-lysidine synthase, found in Brucella abortus (strain S19).